The sequence spans 541 residues: Calcium-dependent protein kinase 25 (541 aa).

Over residues 1 to 11 (MGQCCTGGGKA) the composition is skewed to gly residues. The interval 1-74 (MGQCCTGGGK…AGPIGEVLER (74 aa)) is disordered. Residue Gly-2 is the site of N-myristoyl glycine attachment. A compositionally biased stretch (low complexity) spans 38–67 (AKQQPCSPAAKAAATEAAAAASSSKKPAGP). Residues 83-341 (YSIGKELGRG…AFQVLNHPWI (259 aa)) form the Protein kinase domain. ATP is bound by residues 89-97 (LGRGQFGVT) and Lys-112. Asp-207 functions as the Proton acceptor in the catalytic mechanism. The interval 347-377 (APDVPLDNVVLNRLKQFRAMNQFKKAALRII) is autoinhibitory domain. 4 consecutive EF-hand domains span residues 384–419 (EEIK…QGTK), 420–455 (FSDN…MNKM), 456–491 (DREE…QGLY), and 493–526 (ANEI…GSGC). Residues Asp-397, Asp-399, Ser-401, Thr-403, Glu-408, Asp-433, Asp-435, Asn-437, Glu-444, Asp-469, Asp-471, Ser-473, Tyr-475, Glu-480, Asp-504, Asn-506, Asp-508, Arg-510, and Glu-515 each contribute to the Ca(2+) site.

It belongs to the protein kinase superfamily. Ser/Thr protein kinase family. CDPK subfamily. As to expression, specifically expressed in heading panicles, spikelets and mature pollen grains. Not expressed in vegetative tissues.

Its subcellular location is the membrane. The catalysed reaction is L-seryl-[protein] + ATP = O-phospho-L-seryl-[protein] + ADP + H(+). It catalyses the reaction L-threonyl-[protein] + ATP = O-phospho-L-threonyl-[protein] + ADP + H(+). Activated by calcium. Autophosphorylation may play an important role in the regulation of the kinase activity. Functionally, may play a role in signal transduction pathways that involve calcium as a second messenger. This Oryza sativa subsp. japonica (Rice) protein is Calcium-dependent protein kinase 25.